Reading from the N-terminus, the 76-residue chain is Sulfur carrier protein TusA (76 aa).

C14 serves as the catalytic Cysteine persulfide intermediate.

Belongs to the sulfur carrier protein TusA family. Interacts with IscS.

The protein resides in the cytoplasm. Its pathway is tRNA modification. Functionally, sulfur carrier protein involved in sulfur trafficking in the cell. Part of a sulfur-relay system required for 2-thiolation during synthesis of 2-thiouridine of the modified wobble base 5-methylaminomethyl-2-thiouridine (mnm(5)s(2)U) in tRNA. Interacts with IscS and stimulates its cysteine desulfurase activity. Accepts an activated sulfur from IscS, which is then transferred to TusD, and thus determines the direction of sulfur flow from IscS to 2-thiouridine formation. Also appears to be involved in sulfur transfer for the biosynthesis of molybdopterin. This Buchnera aphidicola subsp. Acyrthosiphon pisum (strain Tuc7) protein is Sulfur carrier protein TusA.